An 83-amino-acid chain; its full sequence is Transmembrane protein EP84R (83 aa).

2 helical membrane-spanning segments follow: residues 31–51 (VIGIILLVISLLLIFIGIIIL) and 59–79 (AGSVLVVLSLILGGGGFFLIY).

Belongs to the asfivirus EP84R family.

The protein localises to the virion membrane. The sequence is that of Transmembrane protein EP84R from Ornithodoros (relapsing fever ticks).